Here is a 160-residue protein sequence, read N- to C-terminus: Peptidyl-prolyl cis-trans isomerase CYP18-1 (160 aa).

The region spanning 3 to 153 (VTLHTNLGDI…AEIRLNRVTI (151 aa)) is the PPIase cyclophilin-type domain.

Belongs to the cyclophilin-type PPIase family. As to expression, ubiquitous.

Its subcellular location is the cytoplasm. The enzyme catalyses [protein]-peptidylproline (omega=180) = [protein]-peptidylproline (omega=0). PPIases accelerate the folding of proteins. It catalyzes the cis-trans isomerization of proline imidic peptide bonds in oligopeptides. The chain is Peptidyl-prolyl cis-trans isomerase CYP18-1 (CYP18-1) from Arabidopsis thaliana (Mouse-ear cress).